A 650-amino-acid chain; its full sequence is MIEENKHFEKKMQEYDASQIQVLEGLEAVRMRPGMYIGSTAKEGLHHLVWEIVDNSIDEALAGFASHIKVFIEADNSITVVDDGRGIPVDIQAKTGRPAVETVFTVLHAGGKFGGGGYKVSGGLHGVGSSVVNALSTQLDVRVYKNGQIHYQEFKRGAVVADLEIIGTTDVTGTTVHFTPDPEIFTETTQFDYSVLAKRIQELAFLNRGLKISITDKRSGMEQEEHFHYEGGIGSYVEFLNDKKDVIFETPIYTDGELEGIAVEVAMQYTTSYQETVMSFANNIHTHEGGTHEQGFRAALTRVINDYAKKNKILKENEDNLTGEDVREGLTAVISVKHPNPQFEGQTKTKLGNSEVVKITNRLFSEAFQRFLLENPQVARKIVEKGILASKARIAAKRAREVTRKKSGLEISNLPGKLADCSSNDANQNELFIVEGDSAGGSAKSGRNREFQAILPIRGKILNVEKATMDKILANEEIRSLFTAMGTGFGADFDVSKARYQKLVIMTDADVDGAHIRTLLLTLIYRFMRPVLEAGYVYIAQPPIYGVKVGSEIKEYIQPGIDQEDQLKTALEKYSIGRSKPTVQRYKGLGEMDDHQLWETTMDPENRLMARVTVDDAAEADKVFDMLMGDRVEPRRDFIEENAVYSTLDI.

In terms of domain architecture, Toprim spans 429-543 (NELFIVEGDS…AGYVYIAQPP (115 aa)). Mg(2+) is bound by residues Glu435, Asp508, and Asp510.

Belongs to the type II topoisomerase GyrB family. In terms of assembly, heterotetramer, composed of two GyrA and two GyrB chains. In the heterotetramer, GyrA contains the active site tyrosine that forms a transient covalent intermediate with DNA, while GyrB binds cofactors and catalyzes ATP hydrolysis. Mg(2+) is required as a cofactor. The cofactor is Mn(2+). Requires Ca(2+) as cofactor.

It is found in the cytoplasm. It catalyses the reaction ATP-dependent breakage, passage and rejoining of double-stranded DNA.. Its function is as follows. A type II topoisomerase that negatively supercoils closed circular double-stranded (ds) DNA in an ATP-dependent manner to modulate DNA topology and maintain chromosomes in an underwound state. Negative supercoiling favors strand separation, and DNA replication, transcription, recombination and repair, all of which involve strand separation. Also able to catalyze the interconversion of other topological isomers of dsDNA rings, including catenanes and knotted rings. Type II topoisomerases break and join 2 DNA strands simultaneously in an ATP-dependent manner. The protein is DNA gyrase subunit B of Streptococcus pyogenes serotype M18 (strain MGAS8232).